A 117-amino-acid chain; its full sequence is Cell division protein FtsB (117 aa).

Topologically, residues 1-6 (MRDWRW) are cytoplasmic. The chain crosses the membrane as a helical span at residues 7–24 (MLLVLALLLGWLQYRFWF). Residues 25 to 117 (GPGNSGEVMM…QVGEHPADVP (93 aa)) lie on the Periplasmic side of the membrane. The stretch at 29–69 (SGEVMMLEAQVTNQERDNEGLQQRNDALAAEVKDLKEGQSA) forms a coiled coil.

This sequence belongs to the FtsB family. Part of a complex composed of FtsB, FtsL and FtsQ.

The protein resides in the cell inner membrane. In terms of biological role, essential cell division protein. May link together the upstream cell division proteins, which are predominantly cytoplasmic, with the downstream cell division proteins, which are predominantly periplasmic. This is Cell division protein FtsB from Stenotrophomonas maltophilia (strain R551-3).